Here is a 137-residue protein sequence, read N- to C-terminus: Large ribosomal subunit protein uL16 (137 aa).

It belongs to the universal ribosomal protein uL16 family. As to quaternary structure, part of the 50S ribosomal subunit.

Functionally, binds 23S rRNA and is also seen to make contacts with the A and possibly P site tRNAs. This Alkalilimnicola ehrlichii (strain ATCC BAA-1101 / DSM 17681 / MLHE-1) protein is Large ribosomal subunit protein uL16.